A 532-amino-acid polypeptide reads, in one-letter code: Maternal protein exuperantia (532 aa).

2 disordered regions span residues 206 to 251 (CSAS…NAVQ) and 403 to 491 (TVKP…NGLK). Low complexity-rich tracts occupy residues 220-231 (GSSMVSDSVSIS) and 404-417 (VKPV…NNNN). A compositionally biased stretch (polar residues) spans 454-467 (SVSSLPDSTTKTPS). The residue at position 467 (serine 467) is a Phosphoserine.

Component of the osk RNP complex, which is composed of at least exuperantia (exu), ypsilon schachtel (yps), aret (bruno), cup, and the mRNA of osk. In the sponge body, forms a ribonucleoprotein complex (RNP) containing at least me31B, exu, yps and the mRNA of osk; interactions with exu and yps are RNA dependent.

It is found in the cytoplasm. The protein resides in the cytoplasmic ribonucleoprotein granule. In terms of biological role, ensures the proper localization of the mRNA of the bicoid gene to the anterior regions of the oocyte thus playing a fundamental role in the establishment of the polarity of the oocyte. May bind the bcd mRNA. This chain is Maternal protein exuperantia (exu), found in Drosophila melanogaster (Fruit fly).